The primary structure comprises 118 residues: MRSAKLKFEKRRSRIRHKISQTSNRVRLSIFKSCRHIYAQIIDDSKSITIASASTLDAKIKKLKKSHCNIENAIKVGKAIATKADSAGIKEVVFDRGGYKYHGVVKALADAAREKIKF.

This sequence belongs to the universal ribosomal protein uL18 family. Part of the 50S ribosomal subunit; part of the 5S rRNA/L5/L18/L25 subcomplex. Contacts the 5S and 23S rRNAs.

Its function is as follows. This is one of the proteins that bind and probably mediate the attachment of the 5S RNA into the large ribosomal subunit, where it forms part of the central protuberance. The polypeptide is Large ribosomal subunit protein uL18 (Rickettsia canadensis (strain McKiel)).